The sequence spans 166 residues: Disulfide bond formation protein B (166 aa).

At 1 to 11 (MQSFAFSTRAL) the chain is on the cytoplasmic side. A helical membrane pass occupies residues 12-28 (FLGLFAVCAGLLGFGLY). The Periplasmic segment spans residues 29-46 (LQHAVGLEPCPMCIMQRY). C38 and C41 are disulfide-bonded. The helical transmembrane segment at 47–63 (AFVAIALTALVAGLHGP) threads the bilayer. The Cytoplasmic segment spans residues 64-70 (GRRGTRA). The chain crosses the membrane as a helical span at residues 71–87 (YAAVILLLALAGGGVAL). Residues 88 to 143 (RQTWMQLYPPEFAECGPDLEFMLGSFPLADALPMIFQGAGDCSKVDWAFLGLSIAN) are Periplasmic-facing. C102 and C129 are joined by a disulfide. A helical membrane pass occupies residues 144 to 162 (WSLVCLTLVAVFAIMMIAR). The Cytoplasmic portion of the chain corresponds to 163–166 (KRGG).

This sequence belongs to the DsbB family.

The protein resides in the cell inner membrane. In terms of biological role, required for disulfide bond formation in some periplasmic proteins. Acts by oxidizing the DsbA protein. This Aromatoleum aromaticum (strain DSM 19018 / LMG 30748 / EbN1) (Azoarcus sp. (strain EbN1)) protein is Disulfide bond formation protein B.